A 6995-amino-acid polypeptide reads, in one-letter code: Fibrous sheath-interacting protein 2 (6995 aa).

Disordered stretches follow at residues 273-292, 308-336, and 351-476; these read EQKIEEQRRKSREESDRKKQ, DTGLKDDIGRNGFDYRGQNGTTFESSSKK, and GDQK…TDAP. The segment covering 359 to 396 has biased composition (polar residues); sequence TSGQVSATVNQSQSSSKDVTKVSASSVTYPAEVQNSSS. Over residues 397-421 the composition is skewed to basic and acidic residues; sequence EQKRSEVTKRLSDERGKNSTDDSAR. Over residues 424–442 the composition is skewed to polar residues; that stretch reads IISTQLSPTRNAKLSQISL. S430 bears the Phosphoserine mark. Over residues 443 to 452 the composition is skewed to basic and acidic residues; it reads DHQKEEKEMK. Polar residues predominate over residues 453–463; sequence STWNGGLSKKS. Residues 665-692 are a coiled coil; sequence LEISLLYDKKAKAMDQIKNLKNVFVNFK. 9 disordered regions span residues 1452–1472, 2554–2595, 2699–2731, 3182–3270, 5489–5665, 5719–5740, 5823–5878, 5943–5996, and 6973–6995; these read PDPQPSCSHQNTETIDKDPPT, KSKR…VPQM, TKTKIKNKLSAGEKTPRESRSKTALGLPQTPQV, PVKM…PNFT, GPSA…KYKG, SKSSVKTDDRPMSKDKETMTEK, KDLS…SKSK, KEDE…PDKL, and SKVFSRSSGSIPKSSSPPHQDKR. A compositionally biased stretch (basic and acidic residues) spans 2555–2565; it reads SKREGEMHDSS. Residues 3187–3204 show a composition bias toward polar residues; it reads PSNTSDTPRTRRSSQGSV. Residues 3220–3231 are compositionally biased toward low complexity; the sequence is SVTSNSSSHISS. Residues 3232-3250 show a composition bias toward polar residues; sequence CVENTNKSLEPMGRSNSEA. The segment covering 3255 to 3265 has biased composition (basic residues); the sequence is SRHKAHDHGQR. The span at 5496–5509 shows a compositional bias: basic and acidic residues; that stretch reads DAKKEDESKVKPAT. 3 stretches are compositionally biased toward polar residues: residues 5523 to 5557, 5565 to 5625, and 5638 to 5650; these read MKSQGSQVQQLATSPPTSMKSQRIQVQQSVMSPPT, QVQQ…QSAM, and VQESSTSPPTTMK. Basic and acidic residues-rich tracts occupy residues 5719–5738 and 5829–5877; these read SKSSVKTDDRPMSKDKETMT and GHRD…ESKS. Residues 5982 to 5993 are compositionally biased toward polar residues; sequence SDVQKTPEQSSP. A compositionally biased stretch (low complexity) spans 6977–6995; it reads SRSSGSIPKSSSPPHQDKR.

In terms of assembly, may interact with AKAP4. Predominantly expressed in testis.

Plays a role in spermatogenesis. The chain is Fibrous sheath-interacting protein 2 (Fsip2) from Mus musculus (Mouse).